Reading from the N-terminus, the 73-residue chain is Potassium channel toxin alpha-KTx 27.4 (73 aa).

The first 26 residues, 1-26 (MKFLFLTLVLLYFTAILVFIVFPSYA), serve as a signal peptide directing secretion.

Belongs to the short scorpion toxin superfamily. Potassium channel inhibitor family. Alpha-KTx 27 subfamily. In terms of processing, contains 4 disulfide bonds. In terms of tissue distribution, expressed by the venom gland.

Its subcellular location is the secreted. This chain is Potassium channel toxin alpha-KTx 27.4, found in Mesobuthus gibbosus (Mediterranean checkered scorpion).